Consider the following 319-residue polypeptide: Transaldolase (319 aa).

Residue K125 is the Schiff-base intermediate with substrate of the active site.

This sequence belongs to the transaldolase family. Type 1 subfamily. As to quaternary structure, homodimer.

It localises to the cytoplasm. It catalyses the reaction D-sedoheptulose 7-phosphate + D-glyceraldehyde 3-phosphate = D-erythrose 4-phosphate + beta-D-fructose 6-phosphate. It functions in the pathway carbohydrate degradation; pentose phosphate pathway; D-glyceraldehyde 3-phosphate and beta-D-fructose 6-phosphate from D-ribose 5-phosphate and D-xylulose 5-phosphate (non-oxidative stage): step 2/3. Its function is as follows. Transaldolase is important for the balance of metabolites in the pentose-phosphate pathway. The chain is Transaldolase from Ralstonia pickettii (strain 12J).